Reading from the N-terminus, the 337-residue chain is uncharacterized protein (337 aa).

The Cytoplasmic portion of the chain corresponds to 1 to 10; it reads MKLKINIRPN. The chain crosses the membrane as a helical span at residues 11-31; sequence EIIFLICIVVIFSFSYTLTYF. Over 32–100 the chain is Extracellular; sequence DSPIFKEHYI…LEKLFSFSDN (69 aa). A helical membrane pass occupies residues 101 to 121; it reads ILIVLIIVQVIVGFLIFLLSV. The Cytoplasmic portion of the chain corresponds to 122-197; that stretch reads EKLSKCNYQL…KILIIKKKRD (76 aa). Residues 148–167 show a composition bias toward low complexity; the sequence is NNNNEDINNNNNNNNNNNNK. Positions 148 to 179 are disordered; the sequence is NNNNEDINNNNNNNNNNNNKNKNDERNNEEIE. A helical membrane pass occupies residues 198–218; the sequence is ILLAIIIFFLVLLGVLTIIYV. At 219–285 the chain is on the extracellular side; sequence SFIPLNIRKA…SWSLDSGLFN (67 aa). The chain crosses the membrane as a helical span at residues 286 to 306; the sequence is VKIVFFSTILIEFLTGCLILL. The Cytoplasmic portion of the chain corresponds to 307–337; sequence MKFKKDPNIVPLTKPSIASPTQIPHLFCIAK.

It localises to the membrane. This is an uncharacterized protein from Dictyostelium discoideum (Social amoeba).